The sequence spans 302 residues: Eukaryotic translation initiation factor 3 subunit F (302 aa).

One can recognise an MPN domain in the interval 23–165 (IVIEPAVLFS…IKTYVSSPVG (143 aa)). Ser-162 is subject to Phosphoserine.

Belongs to the eIF-3 subunit F family. In terms of assembly, component of the eukaryotic translation initiation factor 3 (eIF-3) complex. The eIF-3 complex appears to include tif32/eif3a, SPAC25G10.08/eif3b, tif33/eif3c, SPBC4C3.07/eif3f, tif35/eif3g and sum1/eif3i. This set of common subunits may also associate exclusively with either moe1/eif3d and int6/eif3e, or with SPAC821.05/eif3h and SPAC1751.03/eif3m. The eIF-3 complex may also include SPAC3A12.13c/eif3j.

It is found in the cytoplasm. Component of the eukaryotic translation initiation factor 3 (eIF-3) complex, which is involved in protein synthesis of a specialized repertoire of mRNAs and, together with other initiation factors, stimulates binding of mRNA and methionyl-tRNAi to the 40S ribosome. The eIF-3 complex specifically targets and initiates translation of a subset of mRNAs involved in cell proliferation. This Schizosaccharomyces pombe (strain 972 / ATCC 24843) (Fission yeast) protein is Eukaryotic translation initiation factor 3 subunit F.